A 357-amino-acid polypeptide reads, in one-letter code: MRGSTFLLLSIVGIYGAILNAAAWSVNNFLMTGPKAYLTYSSSVAAGAQSGMEECKFQFGWERWNCPESALQLSTHNRLRSATRETSFVHAISSAGVMYTLTRNCSLGDFESCGCDDSRNGRVGGRGWVWGGCSDNVEFGERISKLFVDALETGHDTRALINLHNNEVGRLAVKATMKRACKCHGVSGSCSIQTCWLQLADFREIGNYLKMKYDQAHKLEMDKRRMRAGNSADSRGATAETFHHVHSTELVFLEDSPDYCTRNASLGHHGTEGRECLQTGKNLSQWERRSCRRLSTECGLKVEERRTEVVSSCNCKFHWCCTVRCEQCRQLVAKHFCARRDAAVANHTKRRNKGHRR.

A signal peptide spans 1 to 16 (MRGSTFLLLSIVGIYG). An intrachain disulfide couples Cys-55 to Cys-66. N-linked (GlcNAc...) asparagine glycosylation occurs at Asn-104. Cystine bridges form between Cys-105/Cys-113, Cys-115/Cys-133, Cys-181/Cys-195, Cys-183/Cys-190, Cys-260/Cys-298, Cys-276/Cys-291, Cys-313/Cys-328, Cys-315/Cys-325, and Cys-320/Cys-321. Ser-187 carries the O-palmitoleoyl serine lipid modification. Residues Asn-263 and Asn-282 are each glycosylated (N-linked (GlcNAc...) asparagine). N-linked (GlcNAc...) asparagine glycosylation is present at Asn-346.

The protein belongs to the Wnt family. Post-translationally, palmitoleoylation is required for efficient binding to frizzled receptors. Depalmitoleoylation leads to Wnt signaling pathway inhibition. Proteolytic processing by tiki1 and tiki2 promotes oxidation and formation of large disulfide-bond oligomers, leading to inactivation of wnt8c. As to expression, cells that form rhombomere 4. Hensen node and the neural plate immediately anterior to it.

The protein resides in the secreted. It is found in the extracellular space. Its subcellular location is the extracellular matrix. In terms of biological role, ligand for members of the frizzled family of seven transmembrane receptors. Probable developmental protein. Is likely to signal over only few cell diameters. May be involved in the regulation of axis formation and in the rhombomere specification. The chain is Protein Wnt-8c (WNT8C) from Gallus gallus (Chicken).